An 866-amino-acid chain; its full sequence is Leucine--tRNA ligase (866 aa).

The short motif at 42-52 is the 'HIGH' region element; the sequence is PYPSGKLHMGH. Residues 624–628 carry the 'KMSKS' region motif; the sequence is TMSKS. Lys-627 contributes to the ATP binding site.

Belongs to the class-I aminoacyl-tRNA synthetase family.

The protein resides in the cytoplasm. The catalysed reaction is tRNA(Leu) + L-leucine + ATP = L-leucyl-tRNA(Leu) + AMP + diphosphate. The protein is Leucine--tRNA ligase of Nitrosospira multiformis (strain ATCC 25196 / NCIMB 11849 / C 71).